Consider the following 225-residue polypeptide: Ribonuclease HII (225 aa).

In terms of domain architecture, RNase H type-2 spans 35–225 (GLVAGVDEVG…SFRPCQISPD (191 aa)). 3 residues coordinate a divalent metal cation: Asp41, Glu42, and Asp137.

This sequence belongs to the RNase HII family. Mn(2+) serves as cofactor. The cofactor is Mg(2+).

Its subcellular location is the cytoplasm. It carries out the reaction Endonucleolytic cleavage to 5'-phosphomonoester.. In terms of biological role, endonuclease that specifically degrades the RNA of RNA-DNA hybrids. This chain is Ribonuclease HII, found in Nostoc sp. (strain PCC 7120 / SAG 25.82 / UTEX 2576).